The chain runs to 375 residues: Neuropeptide Y receptor type 4-2 (375 aa).

At Met-1–Asp-39 the chain is on the extracellular side. Residues Asn-2, Asn-19, and Asn-29 are each glycosylated (N-linked (GlcNAc...) asparagine). The chain crosses the membrane as a helical span at residues Val-40–Leu-60. Topologically, residues Cys-61 to Asp-87 are cytoplasmic. The helical transmembrane segment at Phe-88–Ile-108 threads the bilayer. The Extracellular segment spans residues Phe-109–Met-116. Cys-114 and Cys-201 are oxidised to a cystine. A helical transmembrane segment spans residues Ser-117–Leu-137. At Glu-138 to Gln-155 the chain is on the cytoplasmic side. Residues Ala-156–Ala-176 traverse the membrane as a helical segment. Over Asn-177–Thr-212 the chain is Extracellular. Asn-187 carries N-linked (GlcNAc...) asparagine glycosylation. Residues Ile-213–Cys-233 traverse the membrane as a helical segment. Topologically, residues Tyr-234 to Val-263 are cytoplasmic. Residues Asn-264–Phe-284 form a helical membrane-spanning segment. The Extracellular segment spans residues Asn-285–Asn-301. A helical transmembrane segment spans residues Leu-302–Tyr-322. Residues Gly-323–Ile-375 are Cytoplasmic-facing. Residue Cys-340 is the site of S-palmitoyl cysteine attachment.

Belongs to the G-protein coupled receptor 1 family.

The protein localises to the cell membrane. G protein-coupled receptor for PPY/pancreatic polypeptide/PP, NPY/neuropeptide Y and PYY/peptide YY that is negatively coupled to cAMP. The rank order of affinity for these polypeptides and their derivatives is PP, PP (2-36) and [Ile-31, Gln-34] PP &gt; [Pro-34] PYY &gt; PYY and [Leu-31, Pro-34] NPY &gt; NPY &gt; PYY (3-36) and NPY (2-36) &gt; PP (13-36) &gt; PP (31-36) &gt; NPY free acid. In Homo sapiens (Human), this protein is Neuropeptide Y receptor type 4-2.